A 370-amino-acid polypeptide reads, in one-letter code: D-alanine--D-alanine ligase (370 aa).

The ATP-grasp domain maps to 142-348; the sequence is KQILTHHHIQ…YTALIDQLIQ (207 aa). ATP is bound at residue 172–227; it reads QAHVGDHLFIKPANQGSSIGIHKAENEQEYLDGLADAFKYDYKILVEESIDNPREV. Mg(2+)-binding residues include D302, E315, and N317.

The protein belongs to the D-alanine--D-alanine ligase family. It depends on Mg(2+) as a cofactor. Mn(2+) is required as a cofactor.

The protein resides in the cytoplasm. The catalysed reaction is 2 D-alanine + ATP = D-alanyl-D-alanine + ADP + phosphate + H(+). Its pathway is cell wall biogenesis; peptidoglycan biosynthesis. Functionally, cell wall formation. In Lactiplantibacillus plantarum (strain ATCC BAA-793 / NCIMB 8826 / WCFS1) (Lactobacillus plantarum), this protein is D-alanine--D-alanine ligase.